The primary structure comprises 128 residues: Gastrotropin (128 aa).

A2 carries the N-acetylalanine modification.

The protein belongs to the calycin superfamily. Fatty-acid binding protein (FABP) family. Found exclusively in the ileum and to a lesser extent in distal jejunum.

It is found in the cytoplasm. Its subcellular location is the membrane. In terms of biological role, binds to bile acids and is involved in enterohepatic bile acid metabolism. Required for efficient apical to basolateral transport of conjugated bile acids in ileal enterocytes. Stimulates gastric acid and pepsinogen secretion. The protein is Gastrotropin (FABP6) of Sus scrofa (Pig).